The chain runs to 310 residues: Aspartate carbamoyltransferase catalytic subunit (310 aa).

Positions 55 and 56 each coordinate carbamoyl phosphate. Lys83 serves as a coordination point for L-aspartate. Arg105, His136, and Gln139 together coordinate carbamoyl phosphate. Arg169 and Arg223 together coordinate L-aspartate. Residues Gly264 and Pro265 each contribute to the carbamoyl phosphate site.

The protein belongs to the aspartate/ornithine carbamoyltransferase superfamily. ATCase family. In terms of assembly, heterododecamer (2C3:3R2) of six catalytic PyrB chains organized as two trimers (C3), and six regulatory PyrI chains organized as three dimers (R2).

The catalysed reaction is carbamoyl phosphate + L-aspartate = N-carbamoyl-L-aspartate + phosphate + H(+). The protein operates within pyrimidine metabolism; UMP biosynthesis via de novo pathway; (S)-dihydroorotate from bicarbonate: step 2/3. Its function is as follows. Catalyzes the condensation of carbamoyl phosphate and aspartate to form carbamoyl aspartate and inorganic phosphate, the committed step in the de novo pyrimidine nucleotide biosynthesis pathway. The protein is Aspartate carbamoyltransferase catalytic subunit of Saccharopolyspora erythraea (strain ATCC 11635 / DSM 40517 / JCM 4748 / NBRC 13426 / NCIMB 8594 / NRRL 2338).